Here is a 372-residue protein sequence, read N- to C-terminus: Cyanuric acid amidohydrolase (372 aa).

Residues 1–105 (MPTTLRRAHV…IVFEAREVDE (105 aa)) are RU A. Residues R56 and 84–85 (SG) contribute to the substrate site. The RU B stretch occupies residues 115–252 (SLALGRARTP…HEIMVAGMSR (138 aa)). The active site involves K165. Substrate is bound by residues R197 and 235-236 (SG). The Nucleophile role is filled by S235. An RU C region spans residues 258 to 372 (LAIDHGVMRD…GPVAIIVERT (115 aa)). E305 contributes to the Mg(2+) binding site. Substrate contacts are provided by residues R332 and 351-352 (SG). Mg(2+)-binding residues include A354, Q357, G358, P359, and G362.

This sequence belongs to the cyclic amide hydrolase (CyAH) family. As to quaternary structure, homotetramer.

It carries out the reaction cyanurate + H2O = 1-carboxybiuret + H(+). It functions in the pathway xenobiotic degradation; atrazine degradation; biuret from cyanurate: step 1/1. Its activity is regulated as follows. Inhibited by barbituric acid. Responsible for the hydrolysis of cyanuric acid, an intermediate formed during catabolism of s-triazine based compounds in herbicides such as atrazine and polymers such as melamine. Catalyzes the hydrolytic opening of the s-triazine ring of cyanuric acid (2,4,6-trihydroxy-s-triazine) to yield carbon dioxide and carboxybiuret, which spontaneously decarboxylates to biuret. The polypeptide is Cyanuric acid amidohydrolase (Bradyrhizobium sp. (strain ORS 375)).